The following is a 555-amino-acid chain: Glutamate--tRNA ligase (555 aa).

Positions 100–110 (PNPSGPLHIGH) match the 'HIGH' region motif.

Belongs to the class-I aminoacyl-tRNA synthetase family. Glutamate--tRNA ligase type 2 subfamily.

It is found in the cytoplasm. It catalyses the reaction tRNA(Glu) + L-glutamate + ATP = L-glutamyl-tRNA(Glu) + AMP + diphosphate. In terms of biological role, catalyzes the attachment of glutamate to tRNA(Glu) in a two-step reaction: glutamate is first activated by ATP to form Glu-AMP and then transferred to the acceptor end of tRNA(Glu). This chain is Glutamate--tRNA ligase, found in Methanococcus maripaludis (strain DSM 14266 / JCM 13030 / NBRC 101832 / S2 / LL).